The sequence spans 369 residues: Ferredoxin--NADP reductase, chloroplastic (369 aa).

Residues M1–A55 constitute a chloroplast transit peptide. Residues K90–M212 form the FAD-binding FR-type domain. Residues R148 to S151, C169 to K171, Y175, V186 to S188, and T227 each bind FAD. 2 residues coordinate NADP(+): S151 and K171. NADP(+)-binding positions include T227, V259 to P260, S289 to R290, K299 to Y301, G328 to L329, and E367.

The protein belongs to the ferredoxin--NADP reductase type 1 family. It depends on FAD as a cofactor.

It localises to the plastid. The protein localises to the chloroplast stroma. Its subcellular location is the chloroplast thylakoid membrane. The catalysed reaction is 2 reduced [2Fe-2S]-[ferredoxin] + NADP(+) + H(+) = 2 oxidized [2Fe-2S]-[ferredoxin] + NADPH. It functions in the pathway energy metabolism; photosynthesis. Functionally, may play a key role in regulating the relative amounts of cyclic and non-cyclic electron flow to meet the demands of the plant for ATP and reducing power. This is Ferredoxin--NADP reductase, chloroplastic (PETH) from Spinacia oleracea (Spinach).